A 29-amino-acid polypeptide reads, in one-letter code: Protamine-like protein (29 aa).

The interval 1–29 (MRSFDQGSTRAPARERCRRQRPEGRSAQR) is disordered. The span at 12-29 (PARERCRRQRPEGRSAQR) shows a compositional bias: basic and acidic residues.

The chain is Protamine-like protein (tpr) from Escherichia coli (strain K12).